A 282-amino-acid polypeptide reads, in one-letter code: 4-diphosphocytidyl-2-C-methyl-D-erythritol kinase (282 aa).

Residue Lys9 is part of the active site. 98 to 108 (PMGGGLGGGSS) is a binding site for ATP. The active site involves Asp140.

This sequence belongs to the GHMP kinase family. IspE subfamily. Homodimer.

The catalysed reaction is 4-CDP-2-C-methyl-D-erythritol + ATP = 4-CDP-2-C-methyl-D-erythritol 2-phosphate + ADP + H(+). It functions in the pathway isoprenoid biosynthesis; isopentenyl diphosphate biosynthesis via DXP pathway; isopentenyl diphosphate from 1-deoxy-D-xylulose 5-phosphate: step 3/6. Functionally, catalyzes the phosphorylation of the position 2 hydroxy group of 4-diphosphocytidyl-2C-methyl-D-erythritol. The polypeptide is 4-diphosphocytidyl-2-C-methyl-D-erythritol kinase (Salmonella paratyphi B (strain ATCC BAA-1250 / SPB7)).